The sequence spans 304 residues: Iron(III) enterobactin esterase (304 aa).

Positions 1 to 25 (MRTSLLVAALGLALAAALPGGAPLA) are cleaved as a signal peptide. Residues S182, E242, and H283 each act as charge relay system in the active site.

It belongs to the esterase D family. Monomer.

It localises to the periplasm. The enzyme catalyses Fe(III)-enterobactin + 3 H2O + H(+) = Fe(III)-[N-(2,3-dihydroxybenzoyl)-L-serine] + 2 N-(2,3-dihydroxybenzoyl)-L-serine. It carries out the reaction Fe(III)-enterobactin + H2O = Fe(III)-[N-(2,3-dihydroxybenzoyl)-L-serine]3 + H(+). It catalyses the reaction Fe(III)-[N-(2,3-dihydroxybenzoyl)-L-serine]3 + H2O + H(+) = Fe(III)-[N-(2,3-dihydroxybenzoyl)-L-serine]2 + N-(2,3-dihydroxybenzoyl)-L-serine. The catalysed reaction is Fe(III)-[N-(2,3-dihydroxybenzoyl)-L-serine]2 + H2O + H(+) = Fe(III)-[N-(2,3-dihydroxybenzoyl)-L-serine] + N-(2,3-dihydroxybenzoyl)-L-serine. Its function is as follows. Catalyzes the hydrolysis of ferric enterobactin (Fe-Ent). Hydrolyzes Fe-Ent into three molecules of 2,3-dihydroxybenzoylserine (DHBS) still complexed with ferric iron. Iron reduction is necessary to obtain complete release of the metal from DHBS. It can hydrolyze salmochelin S4 (diglucosyl-C-Ent) but is not involved in iron acquisition by this siderophore. This Pseudomonas aeruginosa (strain ATCC 15692 / DSM 22644 / CIP 104116 / JCM 14847 / LMG 12228 / 1C / PRS 101 / PAO1) protein is Iron(III) enterobactin esterase.